We begin with the raw amino-acid sequence, 578 residues long: ER degradation-enhancing alpha-mannosidase-like protein 2 (578 aa).

The N-terminal stretch at 1 to 21 is a signal peptide; it reads MPFRLLIPLGLLCALLPQHHG. N-linked (GlcNAc...) asparagine glycans are attached at residues N90, N112, N289, and N450. Residues 517–557 form a disordered region; sequence KNTVSSGPWEPPARPGTLFSPENHDQARERKPAKQKVPLLS. Residues 538–548 are compositionally biased toward basic and acidic residues; sequence ENHDQARERKP.

It belongs to the glycosyl hydrolase 47 family. N-glycosylated. Expressed ubiquitously in all tissues tested with slightly higher levels detected in small intestine and peripheral blood leukocytes and weakest levels in brain and skeletal muscle.

Its subcellular location is the endoplasmic reticulum lumen. Functionally, involved in the endoplasmic reticulum-associated degradation (ERAD) pathway that targets misfolded glycoproteins for degradation in an N-glycan-dependent manner. May initiate ERAD by promoting the first mannose trimming step of ERAD substrates, from Man9GlcNAc2 to Man8GlcNAc2. Seems to recognize and bind to exposed hydrophobic regions in target proteins. The sequence is that of ER degradation-enhancing alpha-mannosidase-like protein 2 (EDEM2) from Homo sapiens (Human).